Here is a 99-residue protein sequence, read N- to C-terminus: Small ribosomal subunit protein cS23 (99 aa).

Belongs to the chloroplast-specific ribosomal protein cS23 family. As to quaternary structure, part of the 30S ribosomal subunit.

The protein localises to the plastid. It localises to the chloroplast. In terms of biological role, probably a ribosomal protein or a ribosome-associated protein. In Gracilaria tenuistipitata var. liui (Red alga), this protein is Small ribosomal subunit protein cS23.